We begin with the raw amino-acid sequence, 369 residues long: Anhydro-N-acetylmuramic acid kinase (369 aa).

12 to 19 contacts ATP; the sequence is GTSLDGVD.

This sequence belongs to the anhydro-N-acetylmuramic acid kinase family.

It catalyses the reaction 1,6-anhydro-N-acetyl-beta-muramate + ATP + H2O = N-acetyl-D-muramate 6-phosphate + ADP + H(+). Its pathway is amino-sugar metabolism; 1,6-anhydro-N-acetylmuramate degradation. It participates in cell wall biogenesis; peptidoglycan recycling. Its function is as follows. Catalyzes the specific phosphorylation of 1,6-anhydro-N-acetylmuramic acid (anhMurNAc) with the simultaneous cleavage of the 1,6-anhydro ring, generating MurNAc-6-P. Is required for the utilization of anhMurNAc either imported from the medium or derived from its own cell wall murein, and thus plays a role in cell wall recycling. This chain is Anhydro-N-acetylmuramic acid kinase, found in Escherichia coli O81 (strain ED1a).